A 344-amino-acid polypeptide reads, in one-letter code: uncharacterized protein (344 aa).

A run of 8 helical transmembrane segments spans residues 25-45, 68-88, 104-124, 133-153, 161-181, 224-244, 276-296, and 302-322; these read GAGWACGVTVVLPPPGTVGAV, FVDALLLAGGSAYGLAAADGV, GVVPIVPGAVIFDLPVGGWNC, SACAAAGVDVAVGTVGVGVGA, GVGTASATLQSGVTVGVLAVV, LGAFNTPFNTTIGVIACDAAL, VFALATGAVAVPPEAGVPAAL, and LVTAVGAAAADCLARAVLAGV.

It belongs to the peptidase S58 family.

It is found in the cell membrane. In terms of biological role, aminopeptidase. This is an uncharacterized protein from Mycobacterium bovis (strain ATCC BAA-935 / AF2122/97).